A 215-amino-acid chain; its full sequence is MGRVPRVGIGGPVGAGKSMLIERVVPVLAARGYHVSIVSNDVISKEDADRMRASLATERGLLPEDLVVGVATGGCPHTAVREDPSMNISIIEEIEAGHPELDLVIIESGGDNITTTFSPALADYFIYMIDVAGGDKYPRKGGLGIESCDLLLINKTDLAGMVGADLGVMRADAERIRGERPFGFVNCMTDEGITEVAERIIHDALLGAPPGHPVG.

Residue 11–18 (GPVGAGKS) coordinates GTP.

It belongs to the SIMIBI class G3E GTPase family. UreG subfamily. In terms of assembly, homodimer. UreD, UreF and UreG form a complex that acts as a GTP-hydrolysis-dependent molecular chaperone, activating the urease apoprotein by helping to assemble the nickel containing metallocenter of UreC. The UreE protein probably delivers the nickel.

The protein localises to the cytoplasm. In terms of biological role, facilitates the functional incorporation of the urease nickel metallocenter. This process requires GTP hydrolysis, probably effectuated by UreG. This chain is Urease accessory protein UreG, found in Cenarchaeum symbiosum (strain A).